Reading from the N-terminus, the 318-residue chain is MFLMNLLLLIIPILVAMAFLTLVERKMLGYMQLRKGPNIVGPYGLLQPFADAMKLFIKEPLKPLTSSISLFIIAPSLALTLAFTMWIPLPMPQPLINMNMGILFILATSSLAVYTILWSGWASNSKYALFGALRAVAQTISYEVTLAIILLSVLLLNGSFTLSSLITTQQFTWLLLPTWPLAMMWFISTLAETNRAPFDLTEGESELVSGFNVEYAAGPFALFFMAEYTNIIMMNALTTTIFMGALLNPLNPEMFTFSFTLKTLMLTATFLWIRASYPRFRYDQLMHLLWKNFLPLTLALCMWHISLPVIMACIPPLT.

8 consecutive transmembrane segments (helical) span residues 2 to 22 (FLMN…FLTL), 68 to 88 (ISLF…MWIP), 102 to 122 (ILFI…SGWA), 146 to 166 (LAII…SSLI), 171 to 191 (FTWL…STLA), 217 to 237 (AGPF…MNAL), 253 to 273 (EMFT…FLWI), and 294 to 314 (LPLT…MACI).

The protein belongs to the complex I subunit 1 family.

It is found in the mitochondrion inner membrane. It catalyses the reaction a ubiquinone + NADH + 5 H(+)(in) = a ubiquinol + NAD(+) + 4 H(+)(out). In terms of biological role, core subunit of the mitochondrial membrane respiratory chain NADH dehydrogenase (Complex I) that is believed to belong to the minimal assembly required for catalysis. Complex I functions in the transfer of electrons from NADH to the respiratory chain. The immediate electron acceptor for the enzyme is believed to be ubiquinone. This is NADH-ubiquinone oxidoreductase chain 1 (MT-ND1) from Tamias sibiricus (Siberian chipmunk).